Here is a 501-residue protein sequence, read N- to C-terminus: ATP synthase subunit alpha (501 aa).

169 to 176 (GDRQTGKT) contributes to the ATP binding site.

It belongs to the ATPase alpha/beta chains family. In terms of assembly, F-type ATPases have 2 components, CF(1) - the catalytic core - and CF(0) - the membrane proton channel. CF(1) has five subunits: alpha(3), beta(3), gamma(1), delta(1), epsilon(1). CF(0) has three main subunits: a(1), b(2) and c(9-12). The alpha and beta chains form an alternating ring which encloses part of the gamma chain. CF(1) is attached to CF(0) by a central stalk formed by the gamma and epsilon chains, while a peripheral stalk is formed by the delta and b chains.

Its subcellular location is the cell membrane. It catalyses the reaction ATP + H2O + 4 H(+)(in) = ADP + phosphate + 5 H(+)(out). Its function is as follows. Produces ATP from ADP in the presence of a proton gradient across the membrane. The alpha chain is a regulatory subunit. The chain is ATP synthase subunit alpha from Streptococcus equi subsp. zooepidemicus (strain H70).